A 49-amino-acid polypeptide reads, in one-letter code: Putative metallothionein MT1DP (49 aa).

The segment at 1–29 (MDLSCSCATGGSCTCASSCKCKEYKCTSC) is beta. A divalent metal cation-binding residues include Cys5, Cys7, Cys13, Cys15, Cys19, Cys21, Cys26, Cys29, Cys33, Cys34, Cys36, Cys37, Cys41, Cys44, and Cys48. The segment at 30 to 49 (KKNCCSCCPMGCAKCAQGCT) is alpha.

Belongs to the metallothionein superfamily. Type 1 family.

In terms of biological role, metallothioneins have a high content of cysteine residues that bind various heavy metals. The chain is Putative metallothionein MT1DP (MT1DP) from Homo sapiens (Human).